Here is a 22-residue protein sequence, read N- to C-terminus: thr operon leader peptide (22 aa).

It belongs to the thr operon leader peptide family.

In terms of biological role, this protein is involved in control of the biosynthesis of threonine. This is thr operon leader peptide from Yersinia pestis bv. Antiqua (strain Antiqua).